The primary structure comprises 463 residues: Fumarate hydratase class II (463 aa).

Residues 98-100 (SGT), 129-132 (HPND), 139-141 (SSN), and T187 each bind substrate. H188 (proton donor/acceptor) is an active-site residue. The active site involves S318. Residues S319 and 324-326 (KVN) contribute to the substrate site.

Belongs to the class-II fumarase/aspartase family. Fumarase subfamily. As to quaternary structure, homotetramer.

Its subcellular location is the cytoplasm. The enzyme catalyses (S)-malate = fumarate + H2O. The protein operates within carbohydrate metabolism; tricarboxylic acid cycle; (S)-malate from fumarate: step 1/1. Its function is as follows. Involved in the TCA cycle. Catalyzes the stereospecific interconversion of fumarate to L-malate. In Caulobacter vibrioides (strain ATCC 19089 / CIP 103742 / CB 15) (Caulobacter crescentus), this protein is Fumarate hydratase class II.